Reading from the N-terminus, the 170-residue chain is Bifunctional protein PyrR (170 aa).

Residues 90–102 (LVLIDDVLMSGRT) carry the PRPP-binding motif.

It belongs to the purine/pyrimidine phosphoribosyltransferase family. PyrR subfamily.

The enzyme catalyses UMP + diphosphate = 5-phospho-alpha-D-ribose 1-diphosphate + uracil. Regulates the transcription of the pyrimidine nucleotide (pyr) operon in response to exogenous pyrimidines. In terms of biological role, also displays a weak uracil phosphoribosyltransferase activity which is not physiologically significant. This is Bifunctional protein PyrR from Pseudomonas syringae pv. syringae (strain B728a).